The sequence spans 486 residues: Heme A synthase COX15 (486 aa).

Residues 1–33 (MLFRNIEVGRQAAKLLTRTSSRLAWQSIGASRN) constitute a mitochondrion transit peptide. The Mitochondrial matrix segment spans residues 34-85 (ISTIRQQIRKTQLYNFKKTVSIRPFSLSSPVFKPHVASESNPIESRLKTSKN). Residues 86–106 (VAYWLIGTSGLVFGIVVLGGL) traverse the membrane as a helical segment. Over 107-170 (TRLTESGLSI…FIFFMEWIHR (64 aa)) the chain is Mitochondrial intermembrane. His-169 contacts heme o. The helical transmembrane segment at 171 to 191 (LWGRAIGAVFILPAVYFAVSK) threads the bilayer. Over 192-200 (KTSGHVNKR) the chain is Mitochondrial matrix. The helical transmembrane segment at 201-221 (LFGLAGLLGLQGFVGWWMVKS) threads the bilayer. The Mitochondrial intermembrane portion of the chain corresponds to 222-243 (GLDQEQLDARKSKPTVSQYRLT). The chain crosses the membrane as a helical span at residues 244-264 (THLGTAFFLYMGMLWTGLEIL). His-245 serves as a coordination point for heme o. The Mitochondrial matrix portion of the chain corresponds to 265–293 (RECKWIKNPVQAISLFKKLDNPAIGPMRK). The helical transmembrane segment at 294-314 (ISLALLAVSFLTAMSGGMVAG) threads the bilayer. The Mitochondrial intermembrane segment spans residues 315 to 364 (LDAGWVYNTWPKMGERWFPSSRELMDENFCRREDKKDLWWRNLLENPVTV). The helical transmembrane segment at 365 to 387 (QLVHRTCAYVAFTSVLAAHMYAI) threads the bilayer. His-368 lines the heme b pocket. At 388 to 402 (KKKAVIPRNAMTSLH) the chain is on the mitochondrial matrix side. The helical transmembrane segment at 403–423 (VMMGVVTLQATLGILTILYLV) threads the bilayer. A topological domain (mitochondrial intermembrane) is located at residue Pro-424. Residues 425 to 445 (ISLASIHQAGALALLTSSLVF) traverse the membrane as a helical segment. Position 431 (His-431) interacts with heme b. The Mitochondrial matrix portion of the chain corresponds to 446-486 (ASQLRKPRAPMRNVIITLPHSSKVTSGKILSEASKLASKPL).

The protein belongs to the COX15/CtaA family. Type 2 subfamily. As to quaternary structure, forms 200-350 kDa oligomeric complexes independent on heme binding. In addition to form homooligomeric complexes, a portion also associates with the mitochondrial respiratory supercomplexes. Interacts with CcO assembly factors PET117, SHY1, COA3 and COA1, CcO subunit COX13 and cytochrome b-c1 subunit COR1. The cofactor is heme b.

It localises to the mitochondrion inner membrane. The catalysed reaction is Fe(II)-heme o + 2 A + H2O = Fe(II)-heme a + 2 AH2. It functions in the pathway porphyrin-containing compound metabolism; heme A biosynthesis; heme A from heme O: step 1/1. Its function is as follows. Catalyzes the second reaction in the biosynthesis of heme A, a prosthetic group of mitochondrial cytochrome c oxidase (CcO). Heme A is synthesized from heme B by two sequential enzymatic reactions catalyzed by heme O synthase (HOS/COX10) and heme A synthase (HAS/COX15). HAS catalyzes the conversion of heme O to heme A by two successive hydroxylations of the methyl group at C8, in a reaction that involves matrix ferredoxin YAH1 and ferredoxin reductase ARH1. The first hydroxylation forms heme I, the second hydroxylation results in an unstable dihydroxymethyl group, which spontaneously dehydrates, resulting in the formyl group of heme A. May also play a secondary role in CcO assembly. Plays a role in the maturation of COX1, the heme A-containing structural CcO subunit, possibly by interacting with the COX1-containing sub-assembly complexes that form prior to heme A insertion. May also positively regulate the upstream enzymatic reaction, farnesylation of heme B by HOS/COX10. This chain is Heme A synthase COX15, found in Saccharomyces cerevisiae (strain ATCC 204508 / S288c) (Baker's yeast).